Reading from the N-terminus, the 380-residue chain is Putative T-box protein 40 (380 aa).

A DNA-binding region (T-box) is located at residues 11-192 (MAEEDRWLTQ…KNATFENRLD (182 aa)). The interval 188–215 (ENRLDGGNKRKNTNSREEPSSKRSKNET) is disordered. Basic and acidic residues predominate over residues 189–215 (NRLDGGNKRKNTNSREEPSSKRSKNET).

The protein localises to the nucleus. This is Putative T-box protein 40 (tbx-40) from Caenorhabditis elegans.